Reading from the N-terminus, the 412-residue chain is Serine hydroxymethyltransferase (412 aa).

Residues Leu117 and Gly121 to Leu123 contribute to the (6S)-5,6,7,8-tetrahydrofolate site. Lys226 is modified (N6-(pyridoxal phosphate)lysine).

The protein belongs to the SHMT family. In terms of assembly, homodimer. It depends on pyridoxal 5'-phosphate as a cofactor.

The protein resides in the cytoplasm. It catalyses the reaction (6R)-5,10-methylene-5,6,7,8-tetrahydrofolate + glycine + H2O = (6S)-5,6,7,8-tetrahydrofolate + L-serine. Its pathway is one-carbon metabolism; tetrahydrofolate interconversion. It participates in amino-acid biosynthesis; glycine biosynthesis; glycine from L-serine: step 1/1. In terms of biological role, catalyzes the reversible interconversion of serine and glycine with tetrahydrofolate (THF) serving as the one-carbon carrier. This reaction serves as the major source of one-carbon groups required for the biosynthesis of purines, thymidylate, methionine, and other important biomolecules. Also exhibits THF-independent aldolase activity toward beta-hydroxyamino acids, producing glycine and aldehydes, via a retro-aldol mechanism. The protein is Serine hydroxymethyltransferase of Staphylococcus epidermidis (strain ATCC 35984 / DSM 28319 / BCRC 17069 / CCUG 31568 / BM 3577 / RP62A).